Reading from the N-terminus, the 100-residue chain is NADH-quinone oxidoreductase subunit K 2 (100 aa).

The next 3 helical transmembrane spans lie at 4–24 (LHSYLILSAILFSIGTIGVLI), 29–49 (IVIFMCVEMMLNSVNLTFIAL), and 60–80 (IFVFFVMTVAAAEAAVGLALM).

The protein belongs to the complex I subunit 4L family. As to quaternary structure, NDH-1 is composed of 14 different subunits. Subunits NuoA, H, J, K, L, M, N constitute the membrane sector of the complex.

It localises to the cell inner membrane. It carries out the reaction a quinone + NADH + 5 H(+)(in) = a quinol + NAD(+) + 4 H(+)(out). Functionally, NDH-1 shuttles electrons from NADH, via FMN and iron-sulfur (Fe-S) centers, to quinones in the respiratory chain. The immediate electron acceptor for the enzyme in this species is believed to be ubiquinone. Couples the redox reaction to proton translocation (for every two electrons transferred, four hydrogen ions are translocated across the cytoplasmic membrane), and thus conserves the redox energy in a proton gradient. The polypeptide is NADH-quinone oxidoreductase subunit K 2 (Geobacter metallireducens (strain ATCC 53774 / DSM 7210 / GS-15)).